We begin with the raw amino-acid sequence, 198 residues long: Nucleoid occlusion factor SlmA (198 aa).

Positions 9–70 (RNRREEILQA…SLIEFIEDSL (62 aa)) constitute an HTH tetR-type domain. A DNA-binding region (H-T-H motif) is located at residues 33 to 52 (TTAKLAANVGVSEAALYRHF). The stretch at 117–144 (EQDRLQGRINQLFERIEAQLRQVLKERK) forms a coiled coil.

This sequence belongs to the nucleoid occlusion factor SlmA family. As to quaternary structure, homodimer. Interacts with FtsZ.

The protein resides in the cytoplasm. Its subcellular location is the nucleoid. In terms of biological role, required for nucleoid occlusion (NO) phenomenon, which prevents Z-ring formation and cell division over the nucleoid. Acts as a DNA-associated cell division inhibitor that binds simultaneously chromosomal DNA and FtsZ, and disrupts the assembly of FtsZ polymers. SlmA-DNA-binding sequences (SBS) are dispersed on non-Ter regions of the chromosome, preventing FtsZ polymerization at these regions. This Serratia proteamaculans (strain 568) protein is Nucleoid occlusion factor SlmA.